The primary structure comprises 270 residues: ATP synthase subunit a (270 aa).

Transmembrane regions (helical) follow at residues I40–V60, I98–V118, D143–I163, L208–W228, and A239–V259.

This sequence belongs to the ATPase A chain family. In terms of assembly, F-type ATPases have 2 components, CF(1) - the catalytic core - and CF(0) - the membrane proton channel. CF(1) has five subunits: alpha(3), beta(3), gamma(1), delta(1), epsilon(1). CF(0) has three main subunits: a(1), b(2) and c(9-12). The alpha and beta chains form an alternating ring which encloses part of the gamma chain. CF(1) is attached to CF(0) by a central stalk formed by the gamma and epsilon chains, while a peripheral stalk is formed by the delta and b chains.

It localises to the cell inner membrane. Functionally, key component of the proton channel; it plays a direct role in the translocation of protons across the membrane. This is ATP synthase subunit a from Vibrio vulnificus (strain CMCP6).